Consider the following 208-residue polypeptide: Small ribosomal subunit protein uS4 (208 aa).

The S4 RNA-binding domain maps to 98–163 (SRLDNVVYRA…LTPFVIARAV (66 aa)).

It belongs to the universal ribosomal protein uS4 family. As to quaternary structure, part of the 30S ribosomal subunit. Contacts protein S5. The interaction surface between S4 and S5 is involved in control of translational fidelity.

One of the primary rRNA binding proteins, it binds directly to 16S rRNA where it nucleates assembly of the body of the 30S subunit. Its function is as follows. With S5 and S12 plays an important role in translational accuracy. This Acidothermus cellulolyticus (strain ATCC 43068 / DSM 8971 / 11B) protein is Small ribosomal subunit protein uS4.